Consider the following 168-residue polypeptide: Photosystem I assembly protein Ycf3 (168 aa).

TPR repeat units follow at residues 35 to 68 (AFAY…EIDP), 72 to 105 (SYIL…NPFL), and 120 to 153 (GEQA…TPGN).

The protein belongs to the Ycf3 family.

Its subcellular location is the plastid. It is found in the chloroplast thylakoid membrane. In terms of biological role, essential for the assembly of the photosystem I (PSI) complex. May act as a chaperone-like factor to guide the assembly of the PSI subunits. This Morus indica (Mulberry) protein is Photosystem I assembly protein Ycf3.